A 276-amino-acid polypeptide reads, in one-letter code: Thiazole synthase (276 aa).

Lysine 112 acts as the Schiff-base intermediate with DXP in catalysis. Residues glycine 173, alanine 199–glycine 200, and asparagine 221–threonine 222 contribute to the 1-deoxy-D-xylulose 5-phosphate site.

Belongs to the ThiG family. As to quaternary structure, homotetramer. Forms heterodimers with either ThiH or ThiS.

The protein resides in the cytoplasm. It carries out the reaction [ThiS sulfur-carrier protein]-C-terminal-Gly-aminoethanethioate + 2-iminoacetate + 1-deoxy-D-xylulose 5-phosphate = [ThiS sulfur-carrier protein]-C-terminal Gly-Gly + 2-[(2R,5Z)-2-carboxy-4-methylthiazol-5(2H)-ylidene]ethyl phosphate + 2 H2O + H(+). It participates in cofactor biosynthesis; thiamine diphosphate biosynthesis. Catalyzes the rearrangement of 1-deoxy-D-xylulose 5-phosphate (DXP) to produce the thiazole phosphate moiety of thiamine. Sulfur is provided by the thiocarboxylate moiety of the carrier protein ThiS. In vitro, sulfur can be provided by H(2)S. The protein is Thiazole synthase of Synechococcus sp. (strain ATCC 27144 / PCC 6301 / SAUG 1402/1) (Anacystis nidulans).